Reading from the N-terminus, the 455-residue chain is Kynurenine 3-monooxygenase (455 aa).

This sequence belongs to the aromatic-ring hydroxylase family. KMO subfamily. The cofactor is FAD.

It carries out the reaction L-kynurenine + NADPH + O2 + H(+) = 3-hydroxy-L-kynurenine + NADP(+) + H2O. It participates in cofactor biosynthesis; NAD(+) biosynthesis; quinolinate from L-kynurenine: step 1/3. In terms of biological role, catalyzes the hydroxylation of L-kynurenine (L-Kyn) to form 3-hydroxy-L-kynurenine (L-3OHKyn). Required for synthesis of quinolinic acid. The chain is Kynurenine 3-monooxygenase from Xanthomonas oryzae pv. oryzae (strain MAFF 311018).